Here is a 188-residue protein sequence, read N- to C-terminus: Sec-independent protein translocase protein TatB (188 aa).

The helical transmembrane segment at 1–21 threads the bilayer; sequence MFDIGWSELVVIGVVALVAIG. The disordered stretch occupies residues 147–188; sequence LPVPAETHALATTDLAPPDLAHPAPAHPEPTNSEPAKDAKAS. Residues 160–170 are compositionally biased toward low complexity; the sequence is DLAPPDLAHPA.

The protein belongs to the TatB family. In terms of assembly, the Tat system comprises two distinct complexes: a TatABC complex, containing multiple copies of TatA, TatB and TatC subunits, and a separate TatA complex, containing only TatA subunits. Substrates initially bind to the TatABC complex, which probably triggers association of the separate TatA complex to form the active translocon.

It is found in the cell inner membrane. In terms of biological role, part of the twin-arginine translocation (Tat) system that transports large folded proteins containing a characteristic twin-arginine motif in their signal peptide across membranes. Together with TatC, TatB is part of a receptor directly interacting with Tat signal peptides. TatB may form an oligomeric binding site that transiently accommodates folded Tat precursor proteins before their translocation. The chain is Sec-independent protein translocase protein TatB from Rhodopseudomonas palustris (strain HaA2).